Consider the following 208-residue polypeptide: Redox-sensing transcriptional repressor Rex (208 aa).

The segment at residues 16-55 (VYSRYLENLYRKGITTVSSADIAQGVGVTSAQVRKDLAYF) is a DNA-binding region (H-T-H motif). 90–95 (GAGNLG) provides a ligand contact to NAD(+).

It belongs to the transcriptional regulatory Rex family. Homodimer.

The protein resides in the cytoplasm. Its function is as follows. Modulates transcription in response to changes in cellular NADH/NAD(+) redox state. In Carboxydothermus hydrogenoformans (strain ATCC BAA-161 / DSM 6008 / Z-2901), this protein is Redox-sensing transcriptional repressor Rex.